Reading from the N-terminus, the 468-residue chain is Glutamate--tRNA ligase 2 (468 aa).

The 'HIGH' region signature appears at P9–G19. Residues K238–R242 carry the 'KMSKS' region motif. K241 is an ATP binding site.

The protein belongs to the class-I aminoacyl-tRNA synthetase family. Glutamate--tRNA ligase type 1 subfamily. As to quaternary structure, monomer.

Its subcellular location is the cytoplasm. It carries out the reaction tRNA(Glu) + L-glutamate + ATP = L-glutamyl-tRNA(Glu) + AMP + diphosphate. Catalyzes the attachment of glutamate to tRNA(Glu) in a two-step reaction: glutamate is first activated by ATP to form Glu-AMP and then transferred to the acceptor end of tRNA(Glu). This chain is Glutamate--tRNA ligase 2, found in Rhodospirillum centenum (strain ATCC 51521 / SW).